A 61-amino-acid chain; its full sequence is Adipokinetic prohormone type 2 (61 aa).

An N-terminal signal peptide occupies residues 1-22 (MRQGCALTLMLLVVVCAALSAA). Pyrrolidone carboxylic acid is present on Gln23. Position 30 is a tryptophan amide (Trp30).

The protein belongs to the AKH/HRTH/RPCH family. In terms of assembly, adipokinetic hormone precursor-related peptide (APRP) can form three type of disulfide-bond dimers: p1 (alpha-alpha), p2 (alpha-beta), and p3 (beta-beta).

Its subcellular location is the secreted. Its function is as follows. This hormone, released from cells in the corpora cardiaca, causes release of diglycerides from the fat body and stimulation of muscles to use these diglycerides as an energy source during energy-demanding processes. The sequence is that of Adipokinetic prohormone type 2 from Schistocerca nitens (Vagrant locust).